The sequence spans 96 residues: Protein Vpr (96 aa).

The homooligomerization stretch occupies residues 1–42 (MEQAPEDQGPQREPYHEWTLELLEELKNEAVRHFPRPWLHGL). 3 positions are modified to phosphoserine; by host: Ser-79, Ser-94, and Ser-96.

Belongs to the HIV-1 VPR protein family. As to quaternary structure, homooligomer, may form homodimer. Interacts with p6-gag region of the Pr55 Gag precursor protein through a (Leu-X-X)4 motif near the C-terminus of the P6gag protein. Interacts with host UNG. May interact with host RAD23A/HHR23A. Interacts with host VPRBP/DCAF1, leading to hijack the CUL4A-RBX1-DDB1-DCAF1/VPRBP complex, mediating ubiquitination of host proteins such as TERT and ZGPAT and arrest of the cell cycle in G2 phase. In terms of processing, phosphorylated on several residues by host. These phosphorylations regulate VPR activity for the nuclear import of the HIV-1 pre-integration complex.

Its subcellular location is the virion. The protein resides in the host nucleus. The protein localises to the host extracellular space. In terms of biological role, during virus replication, may deplete host UNG protein, and incude G2-M cell cycle arrest. Acts by targeting specific host proteins for degradation by the 26S proteasome, through association with the cellular CUL4A-DDB1 E3 ligase complex by direct interaction with host VPRPB/DCAF-1. Cell cycle arrest reportedly occurs within hours of infection and is not blocked by antiviral agents, suggesting that it is initiated by the VPR carried into the virion. Additionally, VPR induces apoptosis in a cell cycle dependent manner suggesting that these two effects are mechanistically linked. Detected in the serum and cerebrospinal fluid of AIDS patient, VPR may also induce cell death to bystander cells. Functionally, during virus entry, plays a role in the transport of the viral pre-integration (PIC) complex to the host nucleus. This function is crucial for viral infection of non-dividing macrophages. May act directly at the nuclear pore complex, by binding nucleoporins phenylalanine-glycine (FG)-repeat regions. This Homo sapiens (Human) protein is Protein Vpr.